The chain runs to 470 residues: uncharacterized protein (470 aa).

The SPX domain maps to 1 to 337 (MKFGHDFKRA…SLTAQPLFFQ (337 aa)). Residues 118 to 145 (ASNVPSTPSDSTQQPPTNTLPSVSASSQ) form a disordered region. Positions 122-136 (PSTPSDSTQQPPTNT) are enriched in low complexity. An RING-type zinc finger spans residues 374 to 413 (CAICSNVAYKPVRLGCSHVFCLHCLIILQKQKVDFCPLCR).

Its subcellular location is the cytoplasm. This is an uncharacterized protein from Schizosaccharomyces pombe (strain 972 / ATCC 24843) (Fission yeast).